The chain runs to 360 residues: MKNIFLHSLNLENYRNFKNLELKIDNIPIILTGENGSGKTNILEAISLFYPGRGLRSSKLTDICKTSEDYCRVKALLQSKLGIADFSTHIKRNSNRRITEYNASKIANNELSKFTSMVWLTPQMEGIFTSSSTDRRKFLDRIVYNFDTKHAELLNKYEYYMHERNKILAEDIRDNNWLKIIEENMANISNIIANNRLKTIRFMQQAIDEIENEFPKADLSIDGIIEQKILNVEEDIVSFIITELYQTRSKDKLLGRTSFGIHKSDFLVKHQKKNILAKFCSTGEQKAILIAIILAEMNSTIKLTKITPILLLDEIFVHLDDKRRQYLMDFFTALNIQLWVTATNLDGIENFANKAQLIKL.

33–40 (GENGSGKT) is an ATP binding site.

It belongs to the RecF family.

It is found in the cytoplasm. In terms of biological role, the RecF protein is involved in DNA metabolism; it is required for DNA replication and normal SOS inducibility. RecF binds preferentially to single-stranded, linear DNA. It also seems to bind ATP. This is DNA replication and repair protein RecF from Rickettsia typhi (strain ATCC VR-144 / Wilmington).